The chain runs to 341 residues: uncharacterized protein (341 aa).

This is an uncharacterized protein from Treponema pallidum (strain Nichols).